The chain runs to 176 residues: Cathelicidin-2 (176 aa).

Residues Met1–Ala29 form the signal peptide. Gln30 is subject to Pyrrolidone carboxylic acid. Residues Gln30–Val130 constitute a propeptide that is removed on maturation. Intrachain disulfides connect Cys85–Cys96 and Cys107–Cys124. Residues Pro135–Arg176 form a disordered region. A compositionally biased stretch (pro residues) spans Ile141 to Arg176. The residue at position 173 (Pro173) is a Proline amide. A propeptide spans Gly174–Arg176 (removed in mature form).

It belongs to the cathelicidin family. In terms of processing, elastase is responsible for its maturation.

Its subcellular location is the secreted. In terms of biological role, binds to the lipid A moiety of bacterial lipopolysaccharides (LPS), a glycolipid present in the outer membrane of all Gram-negative bacteria. Shows a potent antimicrobial activity against the Gram-negative bacteria E.coli, S.typhimurium and P.aeruginosa. Less active against the Gram-positive bacteria S.aureus, L.monocytogenes and B.subtilis. The polypeptide is Cathelicidin-2 (CATHL2) (Capra hircus (Goat)).